Reading from the N-terminus, the 96-residue chain is uncharacterized protein (96 aa).

Residues 1-15 (MRLFILLVALFVICA) form the signal peptide.

This is an uncharacterized protein from Caenorhabditis elegans.